The sequence spans 545 residues: Methionine--tRNA ligase (545 aa).

The 'HIGH' region motif lies at 15–25 (PYANGPIHLGH). 4 residues coordinate Zn(2+): Cys146, Cys149, Cys159, and Cys162. Residues 332-336 (KMSKS) carry the 'KMSKS' region motif. An ATP-binding site is contributed by Lys335.

The protein belongs to the class-I aminoacyl-tRNA synthetase family. MetG type 1 subfamily. As to quaternary structure, monomer. The cofactor is Zn(2+).

Its subcellular location is the cytoplasm. The catalysed reaction is tRNA(Met) + L-methionine + ATP = L-methionyl-tRNA(Met) + AMP + diphosphate. Functionally, is required not only for elongation of protein synthesis but also for the initiation of all mRNA translation through initiator tRNA(fMet) aminoacylation. This chain is Methionine--tRNA ligase, found in Hamiltonella defensa subsp. Acyrthosiphon pisum (strain 5AT).